Here is a 254-residue protein sequence, read N- to C-terminus: Ribosomal RNA small subunit methyltransferase G (254 aa).

Positions 84–109 (NTESKTSLNNAETKNTNEALLTSEPF) are insert. Residues Gly115, Phe120, 171 to 172 (AE), and Arg185 contribute to the S-adenosyl-L-methionine site.

This sequence belongs to the methyltransferase superfamily. RNA methyltransferase RsmG family.

The protein localises to the cytoplasm. Its function is as follows. Specifically methylates the N7 position of a guanine in 16S rRNA. The sequence is that of Ribosomal RNA small subunit methyltransferase G from Treponema denticola (strain ATCC 35405 / DSM 14222 / CIP 103919 / JCM 8153 / KCTC 15104).